We begin with the raw amino-acid sequence, 443 residues long: Ribosomal protein uS12 methylthiotransferase RimO (443 aa).

The MTTase N-terminal domain maps to 6 to 116 (PRVGMISLGC…VVNAVHDVVP (111 aa)). Residues Cys-15, Cys-51, Cys-80, Cys-149, Cys-153, and Cys-156 each coordinate [4Fe-4S] cluster. Positions 135–373 (LTPRHYAYLK…MAHQQAISAA (239 aa)) constitute a Radical SAM core domain. The 68-residue stretch at 376–443 (QMKIGKEIEV…DEYDLWAEML (68 aa)) folds into the TRAM domain.

The protein belongs to the methylthiotransferase family. RimO subfamily. [4Fe-4S] cluster is required as a cofactor.

The protein localises to the cytoplasm. The enzyme catalyses L-aspartate(89)-[ribosomal protein uS12]-hydrogen + (sulfur carrier)-SH + AH2 + 2 S-adenosyl-L-methionine = 3-methylsulfanyl-L-aspartate(89)-[ribosomal protein uS12]-hydrogen + (sulfur carrier)-H + 5'-deoxyadenosine + L-methionine + A + S-adenosyl-L-homocysteine + 2 H(+). Functionally, catalyzes the methylthiolation of an aspartic acid residue of ribosomal protein uS12. The chain is Ribosomal protein uS12 methylthiotransferase RimO from Pseudomonas syringae pv. tomato (strain ATCC BAA-871 / DC3000).